The chain runs to 499 residues: Type-1 glutamine synthetase 1 (499 aa).

The region spanning 50 to 146 (PQLKFIRVCW…IFGEFFYLDN (97 aa)) is the GS beta-grasp domain. The region spanning 158–499 (PRNSLQRAID…DQILKLLELF (342 aa)) is the GS catalytic domain.

It belongs to the glutamine synthetase family.

It catalyses the reaction L-glutamate + NH4(+) + ATP = L-glutamine + ADP + phosphate + H(+). The polypeptide is Type-1 glutamine synthetase 1 (glnA1) (Dictyostelium discoideum (Social amoeba)).